The primary structure comprises 360 residues: N-acetylmuramoyl-L-alanine amidase CwlL (360 aa).

The signal sequence occupies residues 1–39 (MVKVVKNFVKVNQYTRPGLKLAGVKGIVMHYTATPGASA). The N-acetylmuramoyl-L-alanine amidase domain occupies 40 to 154 (LNERDYFNGT…DVTNKICPAP (115 aa)). 4 tandem repeats follow at residues 166 to 191 (RKKV…SSKS), 196 to 259 (LKKG…EKAL), 265 to 289 (KKKK…KVKS), and 291 to 355 (LMKG…KAKL). 2 X approximate repeats regions lie at residues 166–289 (RKKV…KVKS) and 196–355 (LKKG…KAKL).

This sequence belongs to the N-acetylmuramoyl-L-alanine amidase 2 family.

Its subcellular location is the secreted. The enzyme catalyses Hydrolyzes the link between N-acetylmuramoyl residues and L-amino acid residues in certain cell-wall glycopeptides.. The sequence is that of N-acetylmuramoyl-L-alanine amidase CwlL (cwlL) from Bacillus licheniformis.